We begin with the raw amino-acid sequence, 356 residues long: Uroporphyrinogen decarboxylase (356 aa).

8 residues coordinate coproporphyrinogen I: arginine 33, alanine 35, arginine 37, arginine 46, aspartate 82, tyrosine 159, serine 214, and histidine 334. Residues arginine 33, alanine 35, and arginine 37 each coordinate coproporphyrinogen III. Residues aspartate 82, tyrosine 159, serine 214, and histidine 334 each coordinate coproporphyrinogen III.

It belongs to the uroporphyrinogen decarboxylase family. As to quaternary structure, homodimer.

Its subcellular location is the cytoplasm. It is found in the cytosol. It carries out the reaction uroporphyrinogen III + 4 H(+) = coproporphyrinogen III + 4 CO2. It participates in porphyrin-containing compound metabolism; protoporphyrin-IX biosynthesis; coproporphyrinogen-III from 5-aminolevulinate: step 4/4. In terms of biological role, catalyzes the decarboxylation of four acetate groups of uroporphyrinogen-III to yield coproporphyrinogen-III. This chain is Uroporphyrinogen decarboxylase, found in Drosophila melanogaster (Fruit fly).